The chain runs to 184 residues: MEFAFYICGLIAILATLRVITHTNPVHALLYLIISLLAISGVFFSLGAYFAGALEIIVYAGAIMVLFVFVVMMLNLGGSEIEQERQWLKPQVWIGPAILSAIMLVVIVYAILGVNDQGIDGTPISAKAVGITLFGPYVLAVELASMLLLAGLVVAFHVGREERAGEVLSNRKDDSAKRKTEEHA.

Residues 1-21 form a helical membrane-spanning segment; sequence MEFAFYICGLIAILATLRVIT. The Cytoplasmic portion of the chain corresponds to 22 to 27; sequence HTNPVH. A helical transmembrane segment spans residues 28–48; sequence ALLYLIISLLAISGVFFSLGA. Residues 49 to 53 are Periplasmic-facing; it reads YFAGA. Residues 54 to 74 traverse the membrane as a helical segment; it reads LEIIVYAGAIMVLFVFVVMML. Over 75–91 the chain is Cytoplasmic; that stretch reads NLGGSEIEQERQWLKPQ. The chain crosses the membrane as a helical span at residues 92-112; the sequence is VWIGPAILSAIMLVVIVYAIL. The Periplasmic portion of the chain corresponds to 113–137; the sequence is GVNDQGIDGTPISAKAVGITLFGPY. A helical membrane pass occupies residues 138–158; that stretch reads VLAVELASMLLLAGLVVAFHV. Topologically, residues 159–184 are cytoplasmic; that stretch reads GREERAGEVLSNRKDDSAKRKTEEHA.

Belongs to the complex I subunit 6 family. In terms of assembly, composed of 13 different subunits. Subunits NuoA, H, J, K, L, M, N constitute the membrane sector of the complex.

The protein localises to the cell inner membrane. The enzyme catalyses a quinone + NADH + 5 H(+)(in) = a quinol + NAD(+) + 4 H(+)(out). Its function is as follows. NDH-1 shuttles electrons from NADH, via FMN and iron-sulfur (Fe-S) centers, to quinones in the respiratory chain. The immediate electron acceptor for the enzyme in this species is believed to be ubiquinone. Couples the redox reaction to proton translocation (for every two electrons transferred, four hydrogen ions are translocated across the cytoplasmic membrane), and thus conserves the redox energy in a proton gradient. In Escherichia coli O157:H7, this protein is NADH-quinone oxidoreductase subunit J (nuoJ).